The sequence spans 270 residues: 3-phenylpropionate-dihydrodiol/cinnamic acid-dihydrodiol dehydrogenase (270 aa).

An NAD(+)-binding site is contributed by 10–34 (FITGGGSGLGLALVERFIEEGAQVA). Ser-143 is a binding site for substrate. Tyr-156 (proton acceptor) is an active-site residue.

The protein belongs to the short-chain dehydrogenases/reductases (SDR) family.

The catalysed reaction is 3-(cis-5,6-dihydroxycyclohexa-1,3-dien-1-yl)propanoate + NAD(+) = 3-(2,3-dihydroxyphenyl)propanoate + NADH + H(+). The enzyme catalyses (2E)-3-(cis-5,6-dihydroxycyclohexa-1,3-dien-1-yl)prop-2-enoate + NAD(+) = (2E)-3-(2,3-dihydroxyphenyl)prop-2-enoate + NADH + H(+). It participates in aromatic compound metabolism; 3-phenylpropanoate degradation. Its function is as follows. Converts 3-phenylpropionate-dihydrodiol (PP-dihydrodiol) and cinnamic acid-dihydrodiol (CI-dihydrodiol) into 3-(2,3-dihydroxylphenyl)propanoic acid (DHPP) and 2,3-dihydroxicinnamic acid (DHCI), respectively. The sequence is that of 3-phenylpropionate-dihydrodiol/cinnamic acid-dihydrodiol dehydrogenase from Escherichia coli (strain SMS-3-5 / SECEC).